The sequence spans 344 residues: Putative [LysW]-lysine/[LysW]-ornithine hydrolase (344 aa).

His-66 is a binding site for Zn(2+). Asp-68 is a catalytic residue. Asp-90 contributes to the Zn(2+) binding site. The Proton acceptor role is filled by Glu-117. Residues Glu-118, Glu-139, and His-297 each contribute to the Zn(2+) site.

This sequence belongs to the peptidase M20A family. LysK subfamily. Zn(2+) is required as a cofactor. The cofactor is Co(2+).

Its subcellular location is the cytoplasm. It catalyses the reaction [amino-group carrier protein]-C-terminal-gamma-(L-lysyl)-L-glutamate + H2O = [amino-group carrier protein]-C-terminal-L-glutamate + L-lysine. The catalysed reaction is [amino-group carrier protein]-C-terminal-gamma-(L-ornithyl)-L-glutamate + H2O = [amino-group carrier protein]-C-terminal-L-glutamate + L-ornithine. The protein operates within amino-acid biosynthesis; L-lysine biosynthesis via AAA pathway; L-lysine from L-alpha-aminoadipate (Thermus route): step 5/5. It participates in amino-acid biosynthesis; L-arginine biosynthesis. In terms of biological role, catalyzes the release of L-lysine from [LysW]-gamma-L-lysine and the release of L-ornithine from [LysW]-L-ornithine. This is Putative [LysW]-lysine/[LysW]-ornithine hydrolase from Thermococcus kodakarensis (strain ATCC BAA-918 / JCM 12380 / KOD1) (Pyrococcus kodakaraensis (strain KOD1)).